The sequence spans 259 residues: Major cell-binding factor (259 aa).

A signal peptide spans 1 to 26 (MVFRKSLLKLAVFALGACVAFSNANA).

This sequence belongs to the bacterial solute-binding protein 3 family.

It localises to the cell surface. In terms of biological role, common antigen and a major cell adherence molecule. Most probably involved, with PEB1C, in a binding-protein-dependent transport system for an amino acid. May be involved in binding to intestinal cells. The polypeptide is Major cell-binding factor (peb1A) (Campylobacter jejuni subsp. jejuni serotype O:2 (strain ATCC 700819 / NCTC 11168)).